Consider the following 241-residue polypeptide: Microneme antigen (241 aa).

The N-terminal stretch at 1-34 (MRLPIRFPKYVLYGMASAVWSILFLHILVGDTMS) is a signal peptide. The propeptide occupies 35 to 103 (AADALSWSGG…ATGRGPSFVH (69 aa)). Positions 61–83 (HEMGKELEQQHGAEEQQMQRDTK) are enriched in basic and acidic residues. Positions 61–92 (HEMGKELEQQHGAEEQQMQRDTKPAAFSNPPH) are disordered. PAN domains lie at 112-181 (CFPH…PRSC) and 185-241 (CTDN…FNKS). Disulfide bonds link Cys-112/Cys-181, Cys-137/Cys-159, Cys-141/Cys-147, Cys-185/Cys-189, Cys-210/Cys-230, and Cys-214/Cys-220. Ser-121 is a binding site for a carbohydrate. Residues Lys-162, Tyr-169, and Asp-174 each contribute to the a carbohydrate site.

It belongs to the microneme antigen family. As to quaternary structure, homodimer or heterodimer of major microneme antigen and microneme antigen. Post-translationally, contains six disulfide bonds.

The protein resides in the cytoplasmic vesicle. The protein localises to the secretory vesicle. It is found in the microneme. Functionally, galactose-binding lectin. Plays a role in adhesion to the host cell. Has a potential role in invasion of host cells. The sequence is that of Microneme antigen from Sarcocystis muris.